We begin with the raw amino-acid sequence, 208 residues long: FMN-dependent NADH:quinone oxidoreductase 1 (208 aa).

It belongs to the azoreductase type 1 family. Homodimer. The cofactor is FMN.

The enzyme catalyses 2 a quinone + NADH + H(+) = 2 a 1,4-benzosemiquinone + NAD(+). It catalyses the reaction N,N-dimethyl-1,4-phenylenediamine + anthranilate + 2 NAD(+) = 2-(4-dimethylaminophenyl)diazenylbenzoate + 2 NADH + 2 H(+). Functionally, quinone reductase that provides resistance to thiol-specific stress caused by electrophilic quinones. Also exhibits azoreductase activity. Catalyzes the reductive cleavage of the azo bond in aromatic azo compounds to the corresponding amines. The chain is FMN-dependent NADH:quinone oxidoreductase 1 from Bacillus licheniformis (strain ATCC 14580 / DSM 13 / JCM 2505 / CCUG 7422 / NBRC 12200 / NCIMB 9375 / NCTC 10341 / NRRL NRS-1264 / Gibson 46).